The following is a 176-amino-acid chain: Small ribosomal subunit protein uS5 (176 aa).

One can recognise an S5 DRBM domain in the interval 11-74; the sequence is LSEVLVDVNR…QAAKKRMMKV (64 aa).

It belongs to the universal ribosomal protein uS5 family. In terms of assembly, part of the 30S ribosomal subunit. Contacts proteins S4 and S8.

With S4 and S12 plays an important role in translational accuracy. In terms of biological role, located at the back of the 30S subunit body where it stabilizes the conformation of the head with respect to the body. The sequence is that of Small ribosomal subunit protein uS5 from Rickettsia conorii (strain ATCC VR-613 / Malish 7).